Reading from the N-terminus, the 296-residue chain is Nitrogenase iron protein (296 aa).

11-18 serves as a coordination point for ATP; that stretch reads GKGGIGKS. C99 is a [4Fe-4S] cluster binding site. R102 is modified (ADP-ribosylarginine; by dinitrogenase reductase ADP-ribosyltransferase). C133 is a [4Fe-4S] cluster binding site.

Belongs to the NifH/BchL/ChlL family. Homodimer. [4Fe-4S] cluster is required as a cofactor. Post-translationally, the reversible ADP-ribosylation of Arg-102 inactivates the nitrogenase reductase and regulates nitrogenase activity.

The catalysed reaction is N2 + 8 reduced [2Fe-2S]-[ferredoxin] + 16 ATP + 16 H2O = H2 + 8 oxidized [2Fe-2S]-[ferredoxin] + 2 NH4(+) + 16 ADP + 16 phosphate + 6 H(+). In terms of biological role, the key enzymatic reactions in nitrogen fixation are catalyzed by the nitrogenase complex, which has 2 components: the iron protein and the molybdenum-iron protein. The chain is Nitrogenase iron protein (nifH1) from Sinorhizobium fredii (strain NBRC 101917 / NGR234).